A 211-amino-acid polypeptide reads, in one-letter code: Probable GTP-binding protein EngB (211 aa).

An EngB-type G domain is found at 21 to 197; the sequence is TAPEFAFLGR…WGEIHRVAAE (177 aa). GTP contacts are provided by residues 29-36, 55-59, 80-83, 147-150, and 176-178; these read GRSNVGKS, GRTRA, DLPG, TKAD, and CSA. Mg(2+)-binding residues include Ser36 and Thr57.

Belongs to the TRAFAC class TrmE-Era-EngA-EngB-Septin-like GTPase superfamily. EngB GTPase family. Mg(2+) is required as a cofactor.

Functionally, necessary for normal cell division and for the maintenance of normal septation. The chain is Probable GTP-binding protein EngB from Acidobacterium capsulatum (strain ATCC 51196 / DSM 11244 / BCRC 80197 / JCM 7670 / NBRC 15755 / NCIMB 13165 / 161).